Reading from the N-terminus, the 184-residue chain is ATP synthase subunit b, chloroplastic (184 aa).

Residues 27–49 (LATNLINLSVVLGVLIFFGKGVL) form a helical membrane-spanning segment.

This sequence belongs to the ATPase B chain family. F-type ATPases have 2 components, F(1) - the catalytic core - and F(0) - the membrane proton channel. F(1) has five subunits: alpha(3), beta(3), gamma(1), delta(1), epsilon(1). F(0) has four main subunits: a(1), b(1), b'(1) and c(10-14). The alpha and beta chains form an alternating ring which encloses part of the gamma chain. F(1) is attached to F(0) by a central stalk formed by the gamma and epsilon chains, while a peripheral stalk is formed by the delta, b and b' chains.

Its subcellular location is the plastid. The protein localises to the chloroplast thylakoid membrane. Its function is as follows. F(1)F(0) ATP synthase produces ATP from ADP in the presence of a proton or sodium gradient. F-type ATPases consist of two structural domains, F(1) containing the extramembraneous catalytic core and F(0) containing the membrane proton channel, linked together by a central stalk and a peripheral stalk. During catalysis, ATP synthesis in the catalytic domain of F(1) is coupled via a rotary mechanism of the central stalk subunits to proton translocation. Functionally, component of the F(0) channel, it forms part of the peripheral stalk, linking F(1) to F(0). The chain is ATP synthase subunit b, chloroplastic from Nicotiana tabacum (Common tobacco).